A 240-amino-acid chain; its full sequence is Late expression factor 5 homolog (240 aa).

Belongs to the baculoviridae LEF-5 family.

Functionally, required for late and very late gene expression. The sequence is that of Late expression factor 5 homolog from Tortricidae (ClGV).